Consider the following 197-residue polypeptide: Adenylate kinase (197 aa).

16 to 21 serves as a coordination point for ATP; it reads GAGKGT. An NMP region spans residues 36–65; that stretch reads STGDILRDHVARGTALGQQAGPLMEAGQLV. AMP contacts are provided by residues Thr37, Arg42, 63–65, 90–93, and Gln97; these read QLV and GFPR. Residues 131 to 147 are LID; it reads DRGRQAVAEGRAPRADD. Arg132 is a binding site for ATP. The interval 137-158 is disordered; the sequence is VAEGRAPRADDNEETARKRQQV. Basic and acidic residues predominate over residues 141–153; sequence RAPRADDNEETAR. AMP contacts are provided by Arg144 and Arg155. Gly183 contributes to the ATP binding site.

This sequence belongs to the adenylate kinase family. In terms of assembly, monomer.

The protein localises to the cytoplasm. The enzyme catalyses AMP + ATP = 2 ADP. The protein operates within purine metabolism; AMP biosynthesis via salvage pathway; AMP from ADP: step 1/1. Catalyzes the reversible transfer of the terminal phosphate group between ATP and AMP. Plays an important role in cellular energy homeostasis and in adenine nucleotide metabolism. This is Adenylate kinase from Deinococcus radiodurans (strain ATCC 13939 / DSM 20539 / JCM 16871 / CCUG 27074 / LMG 4051 / NBRC 15346 / NCIMB 9279 / VKM B-1422 / R1).